The primary structure comprises 89 residues: DNA/RNA-binding protein Alba (89 aa).

At Lys-11 the chain carries N6-acetyllysine.

The protein belongs to the histone-like Alba family. Post-translationally, acetylated. Acetylation at Lys-11 decreases DNA-binding affinity.

The protein localises to the cytoplasm. The protein resides in the chromosome. Its function is as follows. Binds double-stranded DNA tightly but without sequence specificity. Involved in DNA compaction. The polypeptide is DNA/RNA-binding protein Alba (Thermoplasma acidophilum (strain ATCC 25905 / DSM 1728 / JCM 9062 / NBRC 15155 / AMRC-C165)).